Here is a 209-residue protein sequence, read N- to C-terminus: MLLCDIGNSNANFLDDNKYFTLNIDQFLEFKNEQKIFYINVNEHLKEHLKNQKNFINLEPYFLFDTIYQGLGIDRIAACYTIEDGVVVDAGSAITIDIISNSIHLGGFILPGIANYKKIYSHISPRLKSEFNTQVSLDAFPQKTMDALSYGVFKGIYLLIKDAAQNKKLYFTGGDGQFLANYFDHAIYDKLLIFRGMKKIIKENPNLLY.

5-12 (DIGNSNAN) is a binding site for ATP. Substrate is bound by residues Y68 and 72–75 (GIDR). Residue D74 is the Proton acceptor of the active site. Position 89 (D89) interacts with K(+). An ATP-binding site is contributed by S92. T144 contributes to the substrate binding site.

The protein belongs to the type III pantothenate kinase family. In terms of assembly, homodimer. Requires NH4(+) as cofactor. It depends on K(+) as a cofactor.

Its subcellular location is the cytoplasm. It carries out the reaction (R)-pantothenate + ATP = (R)-4'-phosphopantothenate + ADP + H(+). The protein operates within cofactor biosynthesis; coenzyme A biosynthesis; CoA from (R)-pantothenate: step 1/5. In terms of biological role, catalyzes the phosphorylation of pantothenate (Pan), the first step in CoA biosynthesis. This Campylobacter jejuni subsp. jejuni serotype O:2 (strain ATCC 700819 / NCTC 11168) protein is Type III pantothenate kinase.